Here is a 295-residue protein sequence, read N- to C-terminus: Putative enoyl reductase C646.07c (295 aa).

Residues 1–84 lie on the Cytoplasmic side of the membrane; sequence MSITLSSRGR…KDLGPQIGWR (84 aa). The helical transmembrane segment at 85-105 threads the bilayer; sequence TVFMIEYLGPLVIHLFFILNY. The Lumenal segment spans residues 106-157; the sequence is KWIYRKDYNLCLNQKIAFVLVMLHFMKREYESIFVHRFSLATMPLRNIFKNC. Residues 158-178 form a helical membrane-spanning segment; that stretch reads AHYHLLSGLFLAYFIYGPWHA. The Cytoplasmic segment spans residues 179 to 186; the sequence is NDYIKPNH. The chain crosses the membrane as a helical span at residues 187–207; it reads LLFLIVGWAFAVLSNFRTHII. The Lumenal segment spans residues 208–223; that stretch reads LRDLRPAGSKKRVIPT. The chain crosses the membrane as a helical span at residues 224–246; that stretch reads GYGFNLVSFPNYFFESLGWLFFA. Residues 247–250 are Cytoplasmic-facing; it reads LLTK. Residues 251–268 traverse the membrane as a helical segment; the sequence is SWASWIFLFVGSAQMFVW. The Lumenal portion of the chain corresponds to 269–295; that stretch reads AKKKHARYLKEFPNYPRSRKIMIPFFL.

It belongs to the steroid 5-alpha reductase family.

It localises to the endoplasmic reticulum membrane. It carries out the reaction a (2E)-enoyl-CoA + NADPH + H(+) = a 2,3-saturated acyl-CoA + NADP(+). This chain is Putative enoyl reductase C646.07c, found in Schizosaccharomyces pombe (strain 972 / ATCC 24843) (Fission yeast).